The primary structure comprises 103 residues: Large ribosomal subunit protein bL21 (103 aa).

The protein belongs to the bacterial ribosomal protein bL21 family. Part of the 50S ribosomal subunit. Contacts protein L20.

This protein binds to 23S rRNA in the presence of protein L20. This is Large ribosomal subunit protein bL21 from Pseudomonas paraeruginosa (strain DSM 24068 / PA7) (Pseudomonas aeruginosa (strain PA7)).